A 2286-amino-acid chain; its full sequence is Unconventional myosin-IXAb (2286 aa).

The region spanning 16-114 (SEFTLRVYPG…YRFLLREKNL (99 aa)) is the Ras-associating domain. A Myosin motor domain is found at 148–971 (AQFVADLCSL…LRQRLQDELH (824 aa)). Residues 178-198 (IYTYVGSILIAVNPFKFLPIY) form a helical membrane-spanning segment. 242-249 (GESGSGKT) contributes to the ATP binding site. The tract at residues 853-875 (LNKLMETLGQSEPYFVKCIRSNA) is actin-binding. IQ domains lie at 976–996 (RRIV…HFCR), 1025–1054 (QQGA…AVLI), 1066–1095 (RNTA…AAVT), and 1089–1118 (QRRA…QQCR). The neck or regulatory domain stretch occupies residues 976 to 1113 (RRIVCLQRSF…QSRQRCRILR (138 aa)). Positions 1114–2254 (EQQCREQSKH…PRANRSCPPK (1141 aa)) are tail. Disordered stretches follow at residues 1118–1279 (REQS…QIRE), 1308–1341 (DVPL…FSVS), 1455–1588 (CEED…EPML), and 1732–1754 (DGTI…SDTV). A compositionally biased stretch (polar residues) spans 1123-1133 (HPSTVTKSLHQ). A compositionally biased stretch (basic and acidic residues) spans 1134–1149 (NTEEAEKLEEVWEKQT). Over residues 1263 to 1273 (PINSAPQTPNR) the composition is skewed to polar residues. A compositionally biased stretch (acidic residues) spans 1455–1465 (CEEDEDDEYED). Over residues 1485-1501 (CVFHSDSEMSSQKEQKR) the composition is skewed to basic and acidic residues. Residues 1529–1542 (RGKMRFWSKSKHGD) are compositionally biased toward basic residues. 2 stretches are compositionally biased toward basic and acidic residues: residues 1550–1562 (RSAD…RRND) and 1572–1585 (GVSE…ENRE). A Phorbol-ester/DAG-type zinc finger spans residues 1759 to 1808 (GHIFKSTQYSIPTYCEFCSSLIWMMDKACVCKLCRYACHKKCCLRMTTKC). Residues 1823-2011 (VELSRLTSDE…LIICEQMRKY (189 aa)) enclose the Rho-GAP domain. Residues 2032–2049 (LTHIRRSMGKSRARKSGH) show a composition bias toward basic residues. 2 disordered regions span residues 2032 to 2087 (LTHI…QQEE) and 2113 to 2286 (PRAS…EFMV). Residues 2080-2107 (QAAMQQEEKVLTQQIENLQKEKEELTYE) adopt a coiled-coil conformation. Low complexity-rich tracts occupy residues 2176–2192 (SLDS…SVSS) and 2200–2211 (SSSSGPLFSSSS). The span at 2226-2238 (EQASLSARCASSS) shows a compositional bias: polar residues. The span at 2254–2270 (KPREPGDTGGRRREHEF) shows a compositional bias: basic and acidic residues.

It belongs to the TRAFAC class myosin-kinesin ATPase superfamily. Myosin family.

The protein resides in the membrane. The protein localises to the cytoplasm. It is found in the synapse. Its subcellular location is the cell projection. It localises to the growth cone. Functionally, myosins are actin-based motor molecules with ATPase activity. Unconventional myosins serve in intracellular movements. Regulates Rho by stimulating it's GTPase activity in neurons. Required for the regulation of neurite branching and motor neuron axon guidance. This Danio rerio (Zebrafish) protein is Unconventional myosin-IXAb (myo9ab).